The primary structure comprises 313 residues: Homoserine O-succinyltransferase (313 aa).

The active-site Acyl-thioester intermediate is the C142. Substrate-binding residues include K163 and S192. H235 acts as the Proton acceptor in catalysis. E237 is a catalytic residue. R249 contributes to the substrate binding site.

Belongs to the MetA family.

It is found in the cytoplasm. It carries out the reaction L-homoserine + succinyl-CoA = O-succinyl-L-homoserine + CoA. It participates in amino-acid biosynthesis; L-methionine biosynthesis via de novo pathway; O-succinyl-L-homoserine from L-homoserine: step 1/1. Its function is as follows. Transfers a succinyl group from succinyl-CoA to L-homoserine, forming succinyl-L-homoserine. In Shewanella baltica (strain OS223), this protein is Homoserine O-succinyltransferase.